We begin with the raw amino-acid sequence, 99 residues long: UPF0751 protein BAMEG_A0107 (99 aa).

It belongs to the UPF0751 family.

The polypeptide is UPF0751 protein BAMEG_A0107 (Bacillus anthracis (strain CDC 684 / NRRL 3495)).